Here is a 330-residue protein sequence, read N- to C-terminus: Peroxisomal membrane protein PEX13 (330 aa).

A compositionally biased stretch (pro residues) spans 1 to 14; sequence MSAPPTNQPPPLPP. Residues 1-20 are disordered; the sequence is MSAPPTNQPPPLPPRSFDNQ. A helical membrane pass occupies residues 193-213; that stretch reads ASVNWPAALFWVVAIGGPWLI. The 66-residue stretch at 235 to 300 folds into the SH3 domain; it reads APHYTAQALF…PINYVRIVGK (66 aa).

The protein belongs to the peroxin-13 family. Interacts with PEX14/prx-14; forming the PEX13-PEX14 docking complex.

It is found in the peroxisome membrane. Functionally, component of the PEX13-PEX14 docking complex, a translocon channel that specifically mediates the import of peroxisomal cargo proteins bound to PEX5/prx-5 receptor. The PEX13-PEX14 docking complex forms a large import pore which can be opened to a diameter of about 9 nm. Mechanistically, PEX5/prx-5 receptor along with cargo proteins associates with the PEX14/prx-14 subunit of the PEX13-PEX14 docking complex in the cytosol, leading to the insertion of the receptor into the organelle membrane with the concomitant translocation of the cargo into the peroxisome matrix. The protein is Peroxisomal membrane protein PEX13 (prx-13) of Caenorhabditis elegans.